The chain runs to 189 residues: Peptidyl-tRNA hydrolase (189 aa).

Tyrosine 14 lines the tRNA pocket. The active-site Proton acceptor is the histidine 19. TRNA contacts are provided by tyrosine 64, asparagine 66, and asparagine 112.

Belongs to the PTH family. In terms of assembly, monomer.

The protein localises to the cytoplasm. It catalyses the reaction an N-acyl-L-alpha-aminoacyl-tRNA + H2O = an N-acyl-L-amino acid + a tRNA + H(+). Its function is as follows. Hydrolyzes ribosome-free peptidyl-tRNAs (with 1 or more amino acids incorporated), which drop off the ribosome during protein synthesis, or as a result of ribosome stalling. Catalyzes the release of premature peptidyl moieties from peptidyl-tRNA molecules trapped in stalled 50S ribosomal subunits, and thus maintains levels of free tRNAs and 50S ribosomes. The protein is Peptidyl-tRNA hydrolase of Clostridium botulinum (strain Loch Maree / Type A3).